The following is a 415-amino-acid chain: Acetylornithine aminotransferase (415 aa).

Pyridoxal 5'-phosphate-binding positions include 115 to 116 (GA) and F148. A N(2)-acetyl-L-ornithine-binding site is contributed by R151. Position 239–242 (239–242 (DEVQ)) interacts with pyridoxal 5'-phosphate. K268 carries the post-translational modification N6-(pyridoxal phosphate)lysine. S295 provides a ligand contact to N(2)-acetyl-L-ornithine. T296 is a binding site for pyridoxal 5'-phosphate.

It belongs to the class-III pyridoxal-phosphate-dependent aminotransferase family. ArgD subfamily. As to quaternary structure, homodimer. The cofactor is pyridoxal 5'-phosphate.

It is found in the cytoplasm. The catalysed reaction is N(2)-acetyl-L-ornithine + 2-oxoglutarate = N-acetyl-L-glutamate 5-semialdehyde + L-glutamate. Its pathway is amino-acid biosynthesis; L-arginine biosynthesis; N(2)-acetyl-L-ornithine from L-glutamate: step 4/4. In Prochlorococcus marinus subsp. pastoris (strain CCMP1986 / NIES-2087 / MED4), this protein is Acetylornithine aminotransferase.